The following is a 157-amino-acid chain: Arginine regulator (157 aa).

The protein belongs to the ArgR family.

Its subcellular location is the cytoplasm. It functions in the pathway amino-acid degradation; L-arginine degradation via ADI pathway. Regulates the transcription of the arc operon, involved in arginine catabolism. The protein is Arginine regulator (argR1) of Streptococcus pyogenes serotype M3 (strain SSI-1).